The primary structure comprises 540 residues: L-aspartate oxidase (540 aa).

Residues 16-19 (SGAA), K38, 45-52 (STFYAQGG), and D223 contribute to the FAD site. R290 serves as the catalytic Proton donor/acceptor. FAD contacts are provided by residues E375 and 391-392 (SL).

The protein belongs to the FAD-dependent oxidoreductase 2 family. NadB subfamily. It depends on FAD as a cofactor.

The protein localises to the cytoplasm. The enzyme catalyses L-aspartate + O2 = iminosuccinate + H2O2. It catalyses the reaction fumarate + L-aspartate = iminosuccinate + succinate. It participates in cofactor biosynthesis; NAD(+) biosynthesis; iminoaspartate from L-aspartate (oxidase route): step 1/1. In terms of biological role, catalyzes the oxidation of L-aspartate to iminoaspartate, the first step in the de novo biosynthesis of NAD(+). Can use either oxygen or fumarate as electron acceptors, which allows the enzyme to be functional under aerobic and anaerobic conditions. This Escherichia coli O157:H7 protein is L-aspartate oxidase (nadB).